We begin with the raw amino-acid sequence, 480 residues long: Cyclin L homolog cyl-1 (480 aa).

Positions Pro25 to Ser58 are disordered. The segment covering Glu33 to Ser44 has biased composition (basic and acidic residues). Positions Thr45–Ser58 are enriched in polar residues. The Cyclin N-terminal domain maps to Pro91–Val230. The disordered stretch occupies residues Lys368–Arg480. Composition is skewed to basic and acidic residues over residues Lys384 to Glu409 and Asn418 to Lys442. The span at Asp443–Arg453 shows a compositional bias: basic residues. Residues Asp454–Ser472 show a composition bias toward basic and acidic residues.

It belongs to the cyclin family.

Its function is as follows. Involved in pre-mRNA splicing. Functions in association with cyclin-dependent kinases (CDKs). Involved in induction of expression of heat shock protein hsp-16.2 in response to heat shock. Plays a role in male tail development, perhaps acting together with cell cycle regulators cdc-25.2, cdk-1, cyb-3, and cyd-1. This Caenorhabditis elegans protein is Cyclin L homolog cyl-1.